A 55-amino-acid polypeptide reads, in one-letter code: Mitochondrial import receptor subunit TOM7 homolog (55 aa).

Residues 1–20 are Cytoplasmic-facing; it reads MVKLSKEAKQRLQQLFKGSQ. Residues 21-36 form a helical membrane-spanning segment; it reads FAIRWGFIPLVIYLGF. Residues 37–55 are Mitochondrial intermembrane-facing; that stretch reads KRGADPGMPEPTVLSLLWG.

This sequence belongs to the Tom7 family. In terms of assembly, forms part of the preprotein translocase complex of the outer mitochondrial membrane (TOM complex) which consists of at least 7 different proteins (TOMM5, TOMM6, TOMM7, TOMM20, TOMM22, TOMM40 and TOMM70).

The protein localises to the mitochondrion outer membrane. In terms of biological role, required for assembly and stability of the TOM complex. Positive regulator of PRKN translocation to damaged mitochondria. Acts probably by stabilizing PINK1 on the outer membrane of depolarized mitochondria. This chain is Mitochondrial import receptor subunit TOM7 homolog (TOMM7), found in Homo sapiens (Human).